Here is a 309-residue protein sequence, read N- to C-terminus: Olfactory receptor 4B1 (309 aa).

Residues 1-23 (MASTSNVTELIFTGLFQDPAVQS) are Extracellular-facing. An N-linked (GlcNAc...) asparagine glycan is attached at asparagine 6. Residues 24-47 (VCFVVFLPVYLATVVGNGLIVLTV) form a helical membrane-spanning segment. Residues 48-55 (SISKSLDS) are Cytoplasmic-facing. A helical membrane pass occupies residues 56 to 77 (PMYFFLSCLSLVEISYSSTIAP). Residues 78–98 (KFIIDLLAKIKTISLEGCLTQ) lie on the Extracellular side of the membrane. A disulfide bond links cysteine 95 and cysteine 187. Residues 99-118 (IFFFHFFGVAEILLIVVMAY) traverse the membrane as a helical segment. The Cytoplasmic segment spans residues 119-137 (DCYVAICKPLHYMNIISRQ). The chain crosses the membrane as a helical span at residues 138–156 (LCHLLVAGSWLGGFCHSII). Over 157–193 (QILVIIQLPFCGPNVIDHYFCDLQPLFKLACTDTFME) the chain is Extracellular. A helical membrane pass occupies residues 194 to 217 (GVIVLANSGLFSVFSFLILVSSYI). Topologically, residues 218–233 (VILVNLRNHSAEGRHK) are cytoplasmic. The chain crosses the membrane as a helical span at residues 234-256 (ALSTCASHITVVILFFGPAIFLY). Topologically, residues 257–267 (MRPSSTFTEDK) are extracellular. A helical transmembrane segment spans residues 268-287 (LVAVFYTVITPMLNPIIYTL). At 288–309 (RNAEVKIAIRRLWSKKENPGRE) the chain is on the cytoplasmic side.

The protein belongs to the G-protein coupled receptor 1 family.

It localises to the cell membrane. In terms of biological role, odorant receptor. The sequence is that of Olfactory receptor 4B1 (OR4B1) from Homo sapiens (Human).